A 301-amino-acid polypeptide reads, in one-letter code: Porphobilinogen deaminase (301 aa).

C240 carries the post-translational modification S-(dipyrrolylmethanemethyl)cysteine.

This sequence belongs to the HMBS family. As to quaternary structure, monomer. Dipyrromethane serves as cofactor.

The catalysed reaction is 4 porphobilinogen + H2O = hydroxymethylbilane + 4 NH4(+). It participates in porphyrin-containing compound metabolism; protoporphyrin-IX biosynthesis; coproporphyrinogen-III from 5-aminolevulinate: step 2/4. In terms of biological role, tetrapolymerization of the monopyrrole PBG into the hydroxymethylbilane pre-uroporphyrinogen in several discrete steps. The protein is Porphobilinogen deaminase of Clostridioides difficile (strain 630) (Peptoclostridium difficile).